A 203-amino-acid chain; its full sequence is DNA-binding transcriptional repressor ScoC (203 aa).

The region spanning 13-157 (ALVFTQKMAQ…MMCMIRHIYG (145 aa)) is the HTH marR-type domain. Positions 63–86 (ISEIAKFGVMHVSTAFNFSKKLEE) form a DNA-binding region, H-T-H motif. The interval 183–203 (KKKAKDSAADEPAEELEPVNS) is disordered. Residues 191–203 (ADEPAEELEPVNS) are compositionally biased toward acidic residues.

As to quaternary structure, homodimer. Interacts with SinR.

In terms of biological role, negative regulator of protease production and sporulation. Acts by binding directly to the promoter of protease genes (aprE and nprE), and by repressing oligopeptide permease operons (appABCDF and oppABCDF), thereby preventing uptake of oligopeptides required for initiation of sporulation. Acts with SinR as a corepressor of epr expression. Binds to non-m6A-5-methylated 5'-GACGAG-3' sites, tested with scpA; when the target is methylated by DnmA, this repressor no longer binds and transcription is up-regulated. The polypeptide is DNA-binding transcriptional repressor ScoC (Bacillus subtilis (strain 168)).